Here is an 85-residue protein sequence, read N- to C-terminus: MQTVTMYTGPFCPYCTMAKRLLHAAGVGHIDEIRVDASPEAFAEMQQLSGQRSVPQIFIGETHVGGFTDLYRLQQEGGLDGLLNP.

Residues 1-85 enclose the Glutaredoxin domain; the sequence is MQTVTMYTGP…EGGLDGLLNP (85 aa). Cys12 and Cys15 are disulfide-bonded.

The protein belongs to the glutaredoxin family. Monomer.

Its subcellular location is the cytoplasm. Its function is as follows. Has a glutathione-disulfide oxidoreductase activity in the presence of NADPH and glutathione reductase. Reduces low molecular weight disulfides and proteins. This chain is Glutaredoxin (grx), found in Neisseria meningitidis serogroup A / serotype 4A (strain DSM 15465 / Z2491).